Reading from the N-terminus, the 264-residue chain is MSQGQPRRPQQPAGQGENQEPIKYGDVFNVSGELANKPIAPQDAAMMQTAETQVLGQTQKGGTAAVMQAAATRNEQVGVVGHNDITDIAGEQGVTLAETDVAGRRIITEAVAGQVVGQYVQATPVMTSQVGVVLQNAITIGEALEATAKTAGDKPVDQSDAAAVQAAEVRATGSNVIIPGGLAATAQSAAAHNATLDRDEEKIKLNQVLTGATAKLPADKAVTRQDAEGVVSAELRNNPNVATHPGGVAASMAAAARLNENVNA.

Positions 1-16 (MSQGQPRRPQQPAGQG) are enriched in low complexity. The disordered stretch occupies residues 1-23 (MSQGQPRRPQQPAGQGENQEPIK). SMP domains lie at 22–76 (IKYG…RNEQ), 138–194 (ITIG…AHNA), and 203–261 (IKLN…LNEN).

This sequence belongs to the LEA type SMP family.

LEA proteins are late embryonic proteins abundant in higher plant seed embryos. There are two subsets of LEA proteins (5a and 5b), the first ones are expressed when the cotyledon weight reach 80 mg and the second set are expressed above 100 mg. The function of those proteins is not known. The protein is Late embryogenesis abundant protein D-34 of Gossypium hirsutum (Upland cotton).